The chain runs to 367 residues: Cytochrome P450 119 (367 aa).

The heme site is built by histidine 76, arginine 80, threonine 257, arginine 259, histidine 315, and cysteine 317.

The protein belongs to the cytochrome P450 family. Heme is required as a cofactor.

Its subcellular location is the cytoplasm. The sequence is that of Cytochrome P450 119 (cyp119) from Sulfurisphaera tokodaii (strain DSM 16993 / JCM 10545 / NBRC 100140 / 7) (Sulfolobus tokodaii).